The primary structure comprises 399 residues: Acetate kinase (399 aa).

Asn-7 serves as a coordination point for Mg(2+). ATP is bound at residue Lys-14. A substrate-binding site is contributed by Arg-91. Asp-148 (proton donor/acceptor) is an active-site residue. Residues 208–212, 283–285, and 331–335 each bind ATP; these read HIGNG, DMR, and GVGEN. Glu-385 is a binding site for Mg(2+).

The protein belongs to the acetokinase family. In terms of assembly, homodimer. The cofactor is Mg(2+). Mn(2+) is required as a cofactor.

The protein localises to the cytoplasm. It catalyses the reaction acetate + ATP = acetyl phosphate + ADP. Its pathway is metabolic intermediate biosynthesis; acetyl-CoA biosynthesis; acetyl-CoA from acetate: step 1/2. Its function is as follows. Catalyzes the formation of acetyl phosphate from acetate and ATP. Can also catalyze the reverse reaction. The polypeptide is Acetate kinase (Bacteroides thetaiotaomicron (strain ATCC 29148 / DSM 2079 / JCM 5827 / CCUG 10774 / NCTC 10582 / VPI-5482 / E50)).